The sequence spans 342 residues: Pyridoxal 4-dehydrogenase (342 aa).

D56 is an active-site residue. The active-site Proton donor is Y61. Residue K86 is part of the active site. NADP(+) is bound at residue 245–255 (GVFNSGILAAP).

This sequence belongs to the aldo/keto reductase family. In terms of assembly, homodimer.

It carries out the reaction pyridoxal + NAD(+) = 4-pyridoxolactone + NADH + H(+). Its pathway is cofactor degradation; B6 vitamer degradation; 4-pyridoxate from pyridoxal: step 1/2. In Microbacterium luteolum (Aureobacterium luteolum), this protein is Pyridoxal 4-dehydrogenase (pld1).